Consider the following 301-residue polypeptide: Ribosomal RNA small subunit methyltransferase H (301 aa).

Residues 33-35 (GGH), Asp52, Phe79, Asp100, and Gln107 contribute to the S-adenosyl-L-methionine site.

It belongs to the methyltransferase superfamily. RsmH family.

It localises to the cytoplasm. It catalyses the reaction cytidine(1402) in 16S rRNA + S-adenosyl-L-methionine = N(4)-methylcytidine(1402) in 16S rRNA + S-adenosyl-L-homocysteine + H(+). Specifically methylates the N4 position of cytidine in position 1402 (C1402) of 16S rRNA. The chain is Ribosomal RNA small subunit methyltransferase H from Mycoplasmopsis synoviae (strain 53) (Mycoplasma synoviae).